The following is a 553-amino-acid chain: Hydroxylamine reductase (553 aa).

Residues Cys-3, Cys-6, Cys-18, and Cys-25 each contribute to the [2Fe-2S] cluster site. Hybrid [4Fe-2O-2S] cluster contacts are provided by His-252, Glu-276, Cys-320, Cys-408, Cys-436, Cys-461, Glu-495, and Lys-497. Cys-408 is modified (cysteine persulfide).

It belongs to the HCP family. Requires [2Fe-2S] cluster as cofactor. It depends on hybrid [4Fe-2O-2S] cluster as a cofactor.

It localises to the cytoplasm. The catalysed reaction is A + NH4(+) + H2O = hydroxylamine + AH2 + H(+). Catalyzes the reduction of hydroxylamine to form NH(3) and H(2)O. This Aliivibrio fischeri (strain ATCC 700601 / ES114) (Vibrio fischeri) protein is Hydroxylamine reductase.